We begin with the raw amino-acid sequence, 160 residues long: Cyclic pyranopterin monophosphate synthase (160 aa).

Residues Met-77–His-79 and Met-114–Glu-115 contribute to the substrate site. Asp-129 is an active-site residue.

The protein belongs to the MoaC family. As to quaternary structure, homohexamer; trimer of dimers.

The catalysed reaction is (8S)-3',8-cyclo-7,8-dihydroguanosine 5'-triphosphate = cyclic pyranopterin phosphate + diphosphate. It functions in the pathway cofactor biosynthesis; molybdopterin biosynthesis. Catalyzes the conversion of (8S)-3',8-cyclo-7,8-dihydroguanosine 5'-triphosphate to cyclic pyranopterin monophosphate (cPMP). The polypeptide is Cyclic pyranopterin monophosphate synthase (Listeria innocua serovar 6a (strain ATCC BAA-680 / CLIP 11262)).